A 740-amino-acid chain; its full sequence is Protein SIEVE ELEMENT OCCLUSION B (740 aa).

Positions 1–23 are enriched in polar residues; that stretch reads MESLIKSQHAQQLAGHKNTTGKT. Residues 1–27 form a disordered region; it reads MESLIKSQHAQQLAGHKNTTGKTPSME.

Can form homodimer. Expressed in phloem sieve elements.

Functionally, scaffold protein required to form the phloem filament matrix in sieve elements. The sequence is that of Protein SIEVE ELEMENT OCCLUSION B from Arabidopsis thaliana (Mouse-ear cress).